A 673-amino-acid polypeptide reads, in one-letter code: Probable boron transporter 7 (673 aa).

The Cytoplasmic segment spans residues 1 to 35; that stretch reads MEGVKFPFGGIINDFNGRRKCYKQDWLAAFNSGVR. A helical membrane pass occupies residues 36-56; that stretch reads ILAPTLYIFIASALPVIAFGE. At 57–75 the chain is on the extracellular side; that stretch reads QLSRETDRSLGIAESLAST. A helical membrane pass occupies residues 76-96; sequence ALCGIIHSVFGGQPLLIVGVA. Residues 97 to 121 are Cytoplasmic-facing; the sequence is EPTIIMYTYLHSFSKSRPELGQKLY. Residues 122-142 form a helical membrane-spanning segment; that stretch reads LAWAGWVCVWTAVLLMLLAML. Residues 143–160 lie on the Extracellular side of the membrane; the sequence is NACNIISRFTRIAGELFG. Residues 161-181 traverse the membrane as a helical segment; the sequence is MLITVLFIQEAVKGLIGEFLV. Topologically, residues 182–197 are cytoplasmic; it reads PKSDDPSLEVYQFQWR. The chain crosses the membrane as a helical span at residues 198-218; it reads YTNGLLAVIFSFGLLYTALKS. At 219–233 the chain is on the extracellular side; it reads RRARSWKYGFRWMRG. The chain crosses the membrane as a helical span at residues 234 to 254; sequence FIGDYGTLLMLVLWSAFSYTV. Over 255–289 the chain is Cytoplasmic; the sequence is PRNLPEGVPRRLELPLPWASESLYHWTVVKDMAKV. The chain crosses the membrane as a helical span at residues 290–310; that stretch reads PPLYILAAFIPAIMIAGLYFF. Residues 311–330 lie on the Extracellular side of the membrane; sequence DHCVSAQMAQQKEFNLKNPT. A helical membrane pass occupies residues 331–351; the sequence is AYHYDIFILGIMTLICGLLGL. The Cytoplasmic segment spans residues 352 to 468; that stretch reads PPSNGVIPQS…EQRVSNLLQS (117 aa). Residues 469–489 form a helical membrane-spanning segment; the sequence is VLVGLLILAVPVLRMIPTSVL. Topologically, residues 490-556 are extracellular; the sequence is WGYFTYMAVD…QLLYFLICYG (67 aa). The chain crosses the membrane as a helical span at residues 557 to 577; sequence VTWIPVGGILFPLPFFILIAL. Residues 578-673 lie on the Cytoplasmic side of the membrane; it reads RQYILQRLFD…SQMVKIYNHS (96 aa).

This sequence belongs to the anion exchanger (TC 2.A.31.3) family.

The protein resides in the membrane. In terms of biological role, putative boron transporter. Boron is essential for maintaining the integrity of plants cell walls. This is Probable boron transporter 7 (BOR7) from Arabidopsis thaliana (Mouse-ear cress).